Reading from the N-terminus, the 191-residue chain is Molybdenum cofactor guanylyltransferase (191 aa).

GTP is bound by residues 13-15 (LAG), K26, D72, and D102. D102 contributes to the Mg(2+) binding site.

It belongs to the MobA family. As to quaternary structure, monomer. The cofactor is Mg(2+).

It is found in the cytoplasm. The catalysed reaction is Mo-molybdopterin + GTP + H(+) = Mo-molybdopterin guanine dinucleotide + diphosphate. Its function is as follows. Transfers a GMP moiety from GTP to Mo-molybdopterin (Mo-MPT) cofactor (Moco or molybdenum cofactor) to form Mo-molybdopterin guanine dinucleotide (Mo-MGD) cofactor. The protein is Molybdenum cofactor guanylyltransferase of Pseudomonas putida (strain ATCC 47054 / DSM 6125 / CFBP 8728 / NCIMB 11950 / KT2440).